The primary structure comprises 90 residues: Probable Fe(2+)-trafficking protein (90 aa).

This sequence belongs to the Fe(2+)-trafficking protein family.

In terms of biological role, could be a mediator in iron transactions between iron acquisition and iron-requiring processes, such as synthesis and/or repair of Fe-S clusters in biosynthetic enzymes. The chain is Probable Fe(2+)-trafficking protein from Stutzerimonas stutzeri (strain A1501) (Pseudomonas stutzeri).